The primary structure comprises 262 residues: Glutamate racemase (262 aa).

Substrate-binding positions include 5–6 and 37–38; these read DS and YG. The active-site Proton donor/acceptor is Cys69. Substrate is bound at residue 70-71; the sequence is NT. The active-site Proton donor/acceptor is Cys181. 182–183 provides a ligand contact to substrate; sequence TH.

Belongs to the aspartate/glutamate racemases family.

It carries out the reaction L-glutamate = D-glutamate. Its pathway is cell wall biogenesis; peptidoglycan biosynthesis. Functionally, provides the (R)-glutamate required for cell wall biosynthesis. The sequence is that of Glutamate racemase from Buchnera aphidicola subsp. Acyrthosiphon pisum (strain Tuc7).